The primary structure comprises 135 residues: NADH-quinone oxidoreductase subunit A (135 aa).

The next 3 membrane-spanning stretches (helical) occupy residues 9–29, 67–87, and 97–117; these read YFPI…LLTV, VGML…WVVV, and LFGF…FFYI.

Belongs to the complex I subunit 3 family. NDH-1 is composed of 14 different subunits. Subunits NuoA, H, J, K, L, M, N constitute the membrane sector of the complex.

Its subcellular location is the cell inner membrane. The catalysed reaction is a quinone + NADH + 5 H(+)(in) = a quinol + NAD(+) + 4 H(+)(out). Its function is as follows. NDH-1 shuttles electrons from NADH, via FMN and iron-sulfur (Fe-S) centers, to quinones in the respiratory chain. The immediate electron acceptor for the enzyme in this species is believed to be ubiquinone. Couples the redox reaction to proton translocation (for every two electrons transferred, four hydrogen ions are translocated across the cytoplasmic membrane), and thus conserves the redox energy in a proton gradient. The sequence is that of NADH-quinone oxidoreductase subunit A from Solibacter usitatus (strain Ellin6076).